The primary structure comprises 275 residues: Multivesicular body subunit 12A (275 aa).

The region spanning 5–145 (STPITGLAWI…GLVFWCRKGS (141 aa)) is the MABP domain. Positions 151-156 (PTPKPR) match the SH3-binding motif. One can recognise a UMA domain in the interval 216–267 (IDGIPFTIHPMFENTINNSSVAASDFRDLHIKTLSEIESEYNYGFVVEKTAA).

Belongs to the MVB12 family. Component of the ESCRT-I complex (endosomal sorting complex required for transport I).

It localises to the cytoplasm. The protein localises to the endosome. Its subcellular location is the late endosome membrane. Its function is as follows. Component of the ESCRT-I complex, a regulator of vesicular trafficking process. Required for the sorting of endocytic ubiquitinated cargos into multivesicular bodies. The sequence is that of Multivesicular body subunit 12A (mvb12a) from Xenopus laevis (African clawed frog).